The sequence spans 344 residues: tRNA N6-adenosine threonylcarbamoyltransferase (344 aa).

Fe cation is bound by residues His-112 and His-116. Residues 134-138 (LASGG), Asp-167, Gly-180, and Asn-280 contribute to the substrate site. Asp-308 lines the Fe cation pocket.

It belongs to the KAE1 / TsaD family. Fe(2+) serves as cofactor.

The protein localises to the cytoplasm. The catalysed reaction is L-threonylcarbamoyladenylate + adenosine(37) in tRNA = N(6)-L-threonylcarbamoyladenosine(37) in tRNA + AMP + H(+). Its function is as follows. Required for the formation of a threonylcarbamoyl group on adenosine at position 37 (t(6)A37) in tRNAs that read codons beginning with adenine. Is involved in the transfer of the threonylcarbamoyl moiety of threonylcarbamoyl-AMP (TC-AMP) to the N6 group of A37, together with TsaE and TsaB. TsaD likely plays a direct catalytic role in this reaction. This Rickettsia conorii (strain ATCC VR-613 / Malish 7) protein is tRNA N6-adenosine threonylcarbamoyltransferase.